A 194-amino-acid chain; its full sequence is dTTP/UTP pyrophosphatase (194 aa).

Asp-73 functions as the Proton acceptor in the catalytic mechanism.

It belongs to the Maf family. YhdE subfamily. It depends on a divalent metal cation as a cofactor.

It is found in the cytoplasm. The enzyme catalyses dTTP + H2O = dTMP + diphosphate + H(+). It catalyses the reaction UTP + H2O = UMP + diphosphate + H(+). In terms of biological role, nucleoside triphosphate pyrophosphatase that hydrolyzes dTTP and UTP. May have a dual role in cell division arrest and in preventing the incorporation of modified nucleotides into cellular nucleic acids. The polypeptide is dTTP/UTP pyrophosphatase (Clostridium botulinum (strain 657 / Type Ba4)).